A 186-amino-acid chain; its full sequence is NADH-quinone oxidoreductase subunit B (186 aa).

[4Fe-4S] cluster is bound by residues cysteine 44, cysteine 45, cysteine 110, and cysteine 139.

Belongs to the complex I 20 kDa subunit family. As to quaternary structure, NDH-1 is composed of 14 different subunits. Subunits NuoB, C, D, E, F, and G constitute the peripheral sector of the complex. [4Fe-4S] cluster serves as cofactor.

The protein resides in the cell inner membrane. It carries out the reaction a quinone + NADH + 5 H(+)(in) = a quinol + NAD(+) + 4 H(+)(out). Its function is as follows. NDH-1 shuttles electrons from NADH, via FMN and iron-sulfur (Fe-S) centers, to quinones in the respiratory chain. The immediate electron acceptor for the enzyme in this species is believed to be ubiquinone. Couples the redox reaction to proton translocation (for every two electrons transferred, four hydrogen ions are translocated across the cytoplasmic membrane), and thus conserves the redox energy in a proton gradient. The sequence is that of NADH-quinone oxidoreductase subunit B from Leptospira borgpetersenii serovar Hardjo-bovis (strain JB197).